Consider the following 149-residue polypeptide: Transcription factor MafF (149 aa).

The tract at residues arginine 51–lysine 76 is basic motif. The bZIP domain maps to arginine 51 to leucine 114. The segment at leucine 79 to leucine 93 is leucine-zipper.

Belongs to the bZIP family. Maf subfamily. Monomer and homo- or heterodimer. In terms of tissue distribution, highly expressed in the ovary, lower expression in the brain, heart and mesenterium.

The protein localises to the nucleus. Its function is as follows. Since it lacks a putative transactivation domain, it may behave as a transcriptional repressor when it dimerizes among itself. May also serve as a transcriptional activator by dimerizing with other (usually larger) basic-zipper proteins and recruiting them to specific DNA-binding sites. May be involved in the cellular stress response. This is Transcription factor MafF (MAFF) from Gallus gallus (Chicken).